Reading from the N-terminus, the 478-residue chain is Alpha,alpha-trehalose-phosphate synthase [UDP-forming] (478 aa).

The D-glucose 6-phosphate site is built by tyrosine 89 and aspartate 143. Arginine 280 and lysine 285 together coordinate UDP. The UDP-alpha-D-glucose site is built by arginine 280 and lysine 285. Arginine 318 is a binding site for D-glucose 6-phosphate. UDP is bound by residues isoleucine 357 and 383–387 (LVSYE). Residues isoleucine 357 and 379-387 (DGMNLVSYE) each bind UDP-alpha-D-glucose.

The protein belongs to the glycosyltransferase 20 family.

The catalysed reaction is D-glucose 6-phosphate + UDP-alpha-D-glucose = alpha,alpha-trehalose 6-phosphate + UDP + H(+). The protein operates within carbohydrate biosynthesis. With respect to regulation, inhibited by validoxylamine A, a non-reactive trehalose analog. Synthase catalytic subunit of the trehalose synthase complex that catalyzes the production of trehalose from glucose-6-phosphate and UDP-alpha-D-glucose in a two step process. This is Alpha,alpha-trehalose-phosphate synthase [UDP-forming] from Candida albicans (strain SC5314 / ATCC MYA-2876) (Yeast).